The sequence spans 295 residues: N-acetylmuramic acid 6-phosphate etherase (295 aa).

In terms of domain architecture, SIS spans 54 to 217 (VIASFRQGGR…STASMIGIGK (164 aa)). The Proton donor role is filled by Glu82. Residue Glu113 is part of the active site.

The protein belongs to the GCKR-like family. MurNAc-6-P etherase subfamily. As to quaternary structure, homodimer.

The catalysed reaction is N-acetyl-D-muramate 6-phosphate + H2O = N-acetyl-D-glucosamine 6-phosphate + (R)-lactate. The protein operates within amino-sugar metabolism; N-acetylmuramate degradation. In terms of biological role, specifically catalyzes the cleavage of the D-lactyl ether substituent of MurNAc 6-phosphate, producing GlcNAc 6-phosphate and D-lactate. This is N-acetylmuramic acid 6-phosphate etherase from Geobacillus sp. (strain WCH70).